A 401-amino-acid chain; its full sequence is 1-deoxy-D-xylulose 5-phosphate reductoisomerase (401 aa).

NADPH contacts are provided by Thr-10, Gly-11, Ser-12, Ile-13, Gly-36, Arg-37, Asn-38, and Asn-124. Lys-125 is a 1-deoxy-D-xylulose 5-phosphate binding site. Glu-126 provides a ligand contact to NADPH. Asp-150 contributes to the Mn(2+) binding site. 4 residues coordinate 1-deoxy-D-xylulose 5-phosphate: Ser-151, Glu-152, Ser-176, and His-199. A Mn(2+)-binding site is contributed by Glu-152. Gly-205 contributes to the NADPH binding site. 1-deoxy-D-xylulose 5-phosphate contacts are provided by Ser-212, Asn-217, Lys-218, and Glu-221. Position 221 (Glu-221) interacts with Mn(2+).

The protein belongs to the DXR family. It depends on Mg(2+) as a cofactor. The cofactor is Mn(2+).

It carries out the reaction 2-C-methyl-D-erythritol 4-phosphate + NADP(+) = 1-deoxy-D-xylulose 5-phosphate + NADPH + H(+). It functions in the pathway isoprenoid biosynthesis; isopentenyl diphosphate biosynthesis via DXP pathway; isopentenyl diphosphate from 1-deoxy-D-xylulose 5-phosphate: step 1/6. Its function is as follows. Catalyzes the NADPH-dependent rearrangement and reduction of 1-deoxy-D-xylulose-5-phosphate (DXP) to 2-C-methyl-D-erythritol 4-phosphate (MEP). The polypeptide is 1-deoxy-D-xylulose 5-phosphate reductoisomerase (Acaryochloris marina (strain MBIC 11017)).